Consider the following 1007-residue polypeptide: Retinoblastoma-related protein (1007 aa).

The domain A stretch occupies residues 406-604; that stretch reads TPVTTAMTTA…EKGSSMYNSL (199 aa). The pocket stretch occupies residues 406–856; it reads TPVTTAMTTA…NEIFIPAVKP (451 aa). The tract at residues 605-725 is spacer; the sequence is IVARAALSAE…PGREGETCAE (121 aa). The segment at 644 to 665 is disordered; the sequence is PVPSLQKRESSPGQNGDIRSPK. Residues 726–856 form a domain B region; it reads TGINIFFSKI…NEIFIPAVKP (131 aa).

Belongs to the retinoblastoma protein (RB) family.

The protein localises to the nucleus. In terms of biological role, regulator of biological processes that recruits a histone deacetylase to control gene transcription. May play a role in the entry into mitosis, negatively regulating the cell proliferation. Formation of stable complexes with geminiviridae replication-associated proteins may create a cellular environment which favors viral DNA replication. The sequence is that of Retinoblastoma-related protein (RBR) from Vitis vinifera (Grape).